Here is a 330-residue protein sequence, read N- to C-terminus: tRNA N6-adenosine threonylcarbamoyltransferase (330 aa).

Residues His110 and His114 each contribute to the Fe cation site. Residues 133 to 137 (LVSGG), Asp166, Gly179, and Asn268 contribute to the substrate site. Asp296 serves as a coordination point for Fe cation.

The protein belongs to the KAE1 / TsaD family. Requires Fe(2+) as cofactor.

It is found in the cytoplasm. It catalyses the reaction L-threonylcarbamoyladenylate + adenosine(37) in tRNA = N(6)-L-threonylcarbamoyladenosine(37) in tRNA + AMP + H(+). In terms of biological role, required for the formation of a threonylcarbamoyl group on adenosine at position 37 (t(6)A37) in tRNAs that read codons beginning with adenine. Is involved in the transfer of the threonylcarbamoyl moiety of threonylcarbamoyl-AMP (TC-AMP) to the N6 group of A37, together with TsaE and TsaB. TsaD likely plays a direct catalytic role in this reaction. The sequence is that of tRNA N6-adenosine threonylcarbamoyltransferase from Kosmotoga olearia (strain ATCC BAA-1733 / DSM 21960 / TBF 19.5.1).